The chain runs to 805 residues: Hypoxia-inducible factor 1-alpha (805 aa).

The tract at residues 1-26 (MEGSVVVSEKKRISSERRKEKSRDAA) is disordered. Positions 8 to 26 (SEKKRISSERRKEKSRDAA) are enriched in basic and acidic residues. The bHLH domain maps to 17–70 (RRKEKSRDAARCRRSNESEVFYELSHELPLPHNVSSHLDKASIMRLDHQLPAVE). PAS domains follow at residues 85 to 157 (DKQL…PAKK) and 229 to 300 (PHPS…TKGQ). One can recognise a PAC domain in the interval 303-346 (TGQYRMLAKKGGYVWVETQATVIYNSKNSQPQCIVCVNYVLSEV). 4-hydroxyproline is present on residues Pro-404 and Pro-560. Residues 628 to 669 (KESTSAPVSPYNGNRSRTSSPVRPAKAVVDKTEKSRPGTPNL) are disordered. Polar residues predominate over residues 629–648 (ESTSAPVSPYNGNRSRTSSP). The residue at position 782 (Asn-782) is a (3S)-3-hydroxyasparagine.

As to quaternary structure, efficient DNA binding requires heterodimerization of an alpha and a beta/ARNT subunit. In normoxia, is hydroxylated on Pro-404 and Pro-560. The hydroxylated prolines promote interaction with VHL, initiating rapid ubiquitination and subsequent proteasomal degradation. Under hypoxia, proline hydroxylation is impaired and ubiquitination is attenuated, resulting in stabilization. In terms of processing, in normoxia, is hydroxylated on Asn-782, thus abrogating interaction with CREBBP and EP300 and preventing transcriptional activation. Post-translationally, the iron and 2-oxoglutarate dependent 3-hydroxylation of asparagine is (S) stereospecific within HIF CTAD domains.

Its subcellular location is the cytoplasm. The protein resides in the nucleus. The protein localises to the nucleus speckle. Its activity is regulated as follows. Induced by reactive oxygen species (ROS). Functions as a master transcriptional regulator of the adaptive response to hypoxia. Under hypoxic conditions, activates the transcription of over 40 genes, including erythropoietin, glucose transporters, glycolytic enzymes, vascular endothelial growth factor, HILPDA, and other genes whose protein products increase oxygen delivery or facilitate metabolic adaptation to hypoxia. Plays an essential role in embryonic vascularization, tumor angiogenesis and pathophysiology of ischemic disease. The protein is Hypoxia-inducible factor 1-alpha (hif1a) of Xenopus laevis (African clawed frog).